The sequence spans 217 residues: Probable transaldolase (217 aa).

The Schiff-base intermediate with substrate role is filled by K84.

Belongs to the transaldolase family. Type 3B subfamily.

The protein localises to the cytoplasm. It catalyses the reaction D-sedoheptulose 7-phosphate + D-glyceraldehyde 3-phosphate = D-erythrose 4-phosphate + beta-D-fructose 6-phosphate. The protein operates within carbohydrate degradation; pentose phosphate pathway; D-glyceraldehyde 3-phosphate and beta-D-fructose 6-phosphate from D-ribose 5-phosphate and D-xylulose 5-phosphate (non-oxidative stage): step 2/3. In terms of biological role, transaldolase is important for the balance of metabolites in the pentose-phosphate pathway. The protein is Probable transaldolase of Roseiflexus sp. (strain RS-1).